The following is a 645-amino-acid chain: Threonine--tRNA ligase (645 aa).

The 61-residue stretch at 1–61 folds into the TGS domain; the sequence is MIKITLPDGS…TSDSTVQLLT (61 aa). Residues 242-541 are catalytic; it reads DHRKLGKELE…LIEHVAGNFP (300 aa). Zn(2+) is bound by residues Cys337, His388, and His518.

It belongs to the class-II aminoacyl-tRNA synthetase family. As to quaternary structure, homodimer. The cofactor is Zn(2+).

Its subcellular location is the cytoplasm. The catalysed reaction is tRNA(Thr) + L-threonine + ATP = L-threonyl-tRNA(Thr) + AMP + diphosphate + H(+). Functionally, catalyzes the attachment of threonine to tRNA(Thr) in a two-step reaction: L-threonine is first activated by ATP to form Thr-AMP and then transferred to the acceptor end of tRNA(Thr). Also edits incorrectly charged L-seryl-tRNA(Thr). The sequence is that of Threonine--tRNA ligase from Cytophaga hutchinsonii (strain ATCC 33406 / DSM 1761 / CIP 103989 / NBRC 15051 / NCIMB 9469 / D465).